Consider the following 1045-residue polypeptide: Unconventional myosin-Ia (1045 aa).

The 687-residue stretch at 11–697 folds into the Myosin motor domain; it reads AAVGDLVMLD…TLFDLEKRRQ (687 aa). Position 104–111 (104–111) interacts with ATP; sequence GESGAGKT. Positions 574–596 are actin-binding; it reads VATLMKNLYSKNPNYIRCIKPND. 3 IQ domains span residues 701–727, 723–750, and 746–774; these read AELA…RKSQ, MRKS…KRSV, and MKRS…RSDA. The TH1 domain maps to 861–1044; that stretch reads KALYAQSLQQ…RGSHKMEILV (184 aa).

The protein belongs to the TRAFAC class myosin-kinesin ATPase superfamily. Myosin family. As to expression, intestine.

Functionally, could play an important role in morphogenesis and function of intestinal microvilli. The protein is Unconventional myosin-Ia (MYO1A) of Gallus gallus (Chicken).